The sequence spans 584 residues: ATP-dependent lipid A-core flippase (584 aa).

5 consecutive transmembrane segments (helical) span residues 18-38, 65-85, 155-175, 252-272, and 277-297; these read LWPI…TLIL, VFVW…FSGF, IIGL…ILVL, IFDP…LYAA, and VMEM…IVLM. One can recognise an ABC transmembrane type-1 domain in the interval 30 to 312; sequence VVASITLILN…LTNVSAQFQR (283 aa). One can recognise an ABC transporter domain in the interval 344–580; sequence IIFDDVTFFY…QGIYAQLYKL (237 aa). 378 to 385 contacts ATP; the sequence is GRSGSGKS.

Belongs to the ABC transporter superfamily. Lipid exporter (TC 3.A.1.106) family. As to quaternary structure, homodimer.

The protein localises to the cell inner membrane. It catalyses the reaction ATP + H2O + lipid A-core oligosaccharideSide 1 = ADP + phosphate + lipid A-core oligosaccharideSide 2.. Involved in lipopolysaccharide (LPS) biosynthesis. Translocates lipid A-core from the inner to the outer leaflet of the inner membrane. Transmembrane domains (TMD) form a pore in the inner membrane and the ATP-binding domain (NBD) is responsible for energy generation. The polypeptide is ATP-dependent lipid A-core flippase (Blochmanniella pennsylvanica (strain BPEN)).